The chain runs to 382 residues: Mannitol-1-phosphate 5-dehydrogenase (382 aa).

3-14 provides a ligand contact to NAD(+); that stretch reads ALHFGAGNIGRG.

The protein belongs to the mannitol dehydrogenase family.

The catalysed reaction is D-mannitol 1-phosphate + NAD(+) = beta-D-fructose 6-phosphate + NADH + H(+). This chain is Mannitol-1-phosphate 5-dehydrogenase, found in Pectobacterium atrosepticum (strain SCRI 1043 / ATCC BAA-672) (Erwinia carotovora subsp. atroseptica).